The following is a 504-amino-acid chain: Aspartyl/glutamyl-tRNA(Asn/Gln) amidotransferase subunit B (504 aa).

Belongs to the GatB/GatE family. GatB subfamily. In terms of assembly, heterotrimer of A, B and C subunits.

The catalysed reaction is L-glutamyl-tRNA(Gln) + L-glutamine + ATP + H2O = L-glutaminyl-tRNA(Gln) + L-glutamate + ADP + phosphate + H(+). The enzyme catalyses L-aspartyl-tRNA(Asn) + L-glutamine + ATP + H2O = L-asparaginyl-tRNA(Asn) + L-glutamate + ADP + phosphate + 2 H(+). Allows the formation of correctly charged Asn-tRNA(Asn) or Gln-tRNA(Gln) through the transamidation of misacylated Asp-tRNA(Asn) or Glu-tRNA(Gln) in organisms which lack either or both of asparaginyl-tRNA or glutaminyl-tRNA synthetases. The reaction takes place in the presence of glutamine and ATP through an activated phospho-Asp-tRNA(Asn) or phospho-Glu-tRNA(Gln). The sequence is that of Aspartyl/glutamyl-tRNA(Asn/Gln) amidotransferase subunit B from Rhodococcus opacus (strain B4).